Reading from the N-terminus, the 227-residue chain is uncharacterized protein (227 aa).

The signal sequence occupies residues 1-21; sequence MELKKIAVGLTALLGMSVANA.

This is an uncharacterized protein from Haemophilus influenzae (strain ATCC 51907 / DSM 11121 / KW20 / Rd).